Here is an 899-residue protein sequence, read N- to C-terminus: Protein translocase subunit SecA (899 aa).

ATP-binding positions include Gln87, 105–109 (GEGKT), and Asp516. Zn(2+)-binding residues include Cys884, Cys886, Cys895, and His896.

Belongs to the SecA family. In terms of assembly, monomer and homodimer. Part of the essential Sec protein translocation apparatus which comprises SecA, SecYEG and auxiliary proteins SecDF. Other proteins may also be involved. The cofactor is Zn(2+).

The protein resides in the cell inner membrane. It is found in the cytoplasm. The enzyme catalyses ATP + H2O + cellular proteinSide 1 = ADP + phosphate + cellular proteinSide 2.. In terms of biological role, part of the Sec protein translocase complex. Interacts with the SecYEG preprotein conducting channel. Has a central role in coupling the hydrolysis of ATP to the transfer of proteins into and across the cell membrane, serving as an ATP-driven molecular motor driving the stepwise translocation of polypeptide chains across the membrane. The polypeptide is Protein translocase subunit SecA (Borrelia garinii subsp. bavariensis (strain ATCC BAA-2496 / DSM 23469 / PBi) (Borreliella bavariensis)).